The chain runs to 147 residues: Heavy metal-dependent transcription regulator 2 (147 aa).

Positions 1–69 (MNIGEASKTS…VEQIKELLAL (69 aa)) constitute an HTH merR-type domain. The H-T-H motif DNA-binding region spans 3-22 (IGEASKTSGVSSKMIRYYEQ).

It localises to the cytoplasm. Functionally, transcriptional regulator involved in acid tolerance. Binds copper. The polypeptide is Heavy metal-dependent transcription regulator 2 (hmrR2) (Rhizobium meliloti (strain 1021) (Ensifer meliloti)).